The following is a 504-amino-acid chain: Cytochrome P450 2S1 (504 aa).

C440 contributes to the heme binding site.

Belongs to the cytochrome P450 family. It depends on heme as a cofactor. As to expression, expressed at higher levels in extrahepatic tissues including trachea, lung, stomach, small intestine, colon, kidney, breast, placenta and spleen. Expressed in peripheral blood leukocytes. Constitutively expressed in skin (at protein level).

The protein resides in the endoplasmic reticulum membrane. Its subcellular location is the microsome membrane. The enzyme catalyses all-trans-retinoate + reduced [NADPH--hemoprotein reductase] + O2 = all-trans-5,6-epoxyretinoate + oxidized [NADPH--hemoprotein reductase] + H2O + H(+). The catalysed reaction is all-trans-retinoate + reduced [NADPH--hemoprotein reductase] + O2 = all-trans-4-hydroxyretinoate + oxidized [NADPH--hemoprotein reductase] + H2O + H(+). It catalyses the reaction (5S)-hydroperoxy-(6E,8Z,11Z,14Z)-eicosatetraenoate = 5-oxo-(6E,8Z,11Z,14Z)-eicosatetraenoate + H2O. It carries out the reaction (12S)-hydroperoxy-(5Z,8Z,10E,14Z)-eicosatetraenoate = 12-oxo-(5Z,8Z,10E,14Z)-eicosatetraenoate + H2O. The enzyme catalyses (15S)-hydroperoxy-(5Z,8Z,11Z,13E)-eicosatetraenoate = 15-oxo-(5Z,8Z,11Z,13E)-eicosatetraenoate + H2O. The catalysed reaction is prostaglandin H2 = thromboxane A2. It catalyses the reaction prostaglandin H2 = (12S)-hydroxy-(5Z,8E,10E)-heptadecatrienoate + malonaldehyde. It carries out the reaction (13S)-hydroperoxy-(9Z,11E)-octadecadienoate = 13-oxo-(9Z,11E)-octadecadienoate + H2O. Its pathway is lipid metabolism; fatty acid metabolism. A cytochrome P450 monooxygenase involved in the metabolism of retinoids and eicosanoids. In epidermis, may contribute to the oxidative metabolism of all-trans-retinoic acid. For this activity, uses molecular oxygen inserting one oxygen atom into a substrate, and reducing the second into a water molecule, with two electrons provided by NADPH via cytochrome P450 reductase (NADPH--hemoprotein reductase). Additionally, displays peroxidase and isomerase activities toward various oxygenated eicosanoids such as prostaglandin H2 (PGH2) and hydroperoxyeicosatetraenoates (HPETEs). Independently of cytochrome P450 reductase, NADPH, and O2, catalyzes the breakdown of PGH2 to hydroxyheptadecatrienoic acid (HHT) and malondialdehyde (MDA), which is known to act as a mediator of DNA damage. This is Cytochrome P450 2S1 from Homo sapiens (Human).